The following is a 295-amino-acid chain: Polyprenyl transferase dpmaC (295 aa).

Transmembrane regions (helical) follow at residues 39–59 (LFCV…NDWI), 84–104 (QAFV…HVML), 109–124 (VHVI…YPFL), 131–151 (KLHI…AIPG), 168–188 (YCLP…TAYS), 213–233 (LVLV…LTQF), 237–257 (WLWV…LALF), and 271–291 (SNFV…LLKA).

Belongs to the UbiA prenyltransferase family. Requires Mg(2+) as cofactor.

It is found in the membrane. It functions in the pathway secondary metabolite biosynthesis; terpenoid biosynthesis. In terms of biological role, polyprenyl transferase; part of the gene cluster that mediates the biosynthesis of the diterpenoid pyrones subglutinols A and B. The first step of the pathway is the synthesis of the alpha-pyrone moiety by the polyketide synthase dpmaA via condensation of one acetyl-CoA starter unit with 3 malonyl-CoA units and 2 methylations. The alpha-pyrone is then combined with geranylgeranyl pyrophosphate (GGPP) formed by the GGPP synthase dpmaD through the action of the prenyltransferase dpmaC to yield a linear alpha-pyrone diterpenoid. Subsequent steps in the diterpenoid pyrone biosynthetic pathway involve the decalin core formation, which is initiated by the epoxidation of the C10-C11 olefin by the FAD-dependent oxidoreductase dpmaE, and is followed by a cyclization cascade catalyzed by the terpene cyclase dpmaB. The dehydrogenase dpmaF is then involved in tetrahydrofuran (THF) ring formation at the C5 unit to complete the formation of subglutinols A and B. The chain is Polyprenyl transferase dpmaC from Metarhizium anisopliae (Entomophthora anisopliae).